The chain runs to 374 residues: Probable inactive patatin-3-Kuras 1 (374 aa).

The signal sequence occupies residues 1 to 11 (MMLATTSSTFA). The PNPLA domain occupies 20–217 (LSIDGGGIKG…AAVDPSLLSI (198 aa)). The GXGXXG signature appears at 24-29 (GGGIKG). Residues Asn48 and Asn191 are each glycosylated (N-linked (GlcNAc...) asparagine). The active-site Proton acceptor is Asp204. The N-linked (GlcNAc...) asparagine glycan is linked to Asn257.

This sequence belongs to the patatin family. In terms of processing, N-glycosylated. In terms of tissue distribution, tuber.

The protein resides in the vacuole. This Solanum tuberosum (Potato) protein is Probable inactive patatin-3-Kuras 1 (pat3-k1).